A 444-amino-acid chain; its full sequence is Phosphoglucosamine mutase (444 aa).

Ser-104 functions as the Phosphoserine intermediate in the catalytic mechanism. Positions 104, 243, 245, and 247 each coordinate Mg(2+). Ser-104 carries the phosphoserine modification.

The protein belongs to the phosphohexose mutase family. The cofactor is Mg(2+). Activated by phosphorylation.

The enzyme catalyses alpha-D-glucosamine 1-phosphate = D-glucosamine 6-phosphate. In terms of biological role, catalyzes the conversion of glucosamine-6-phosphate to glucosamine-1-phosphate. The protein is Phosphoglucosamine mutase of Neisseria meningitidis serogroup C (strain 053442).